Reading from the N-terminus, the 506-residue chain is Protein MGF 505-9R (506 aa).

This sequence belongs to the asfivirus MGF 505 family.

Functionally, plays a role in virus cell tropism, and may be required for efficient virus replication in macrophages. This is Protein MGF 505-9R from Ornithodoros (relapsing fever ticks).